Here is a 358-residue protein sequence, read N- to C-terminus: tRNA-specific 2-thiouridylase MnmA (358 aa).

Residues 6–13 (AMSGGVDS) and Leu-32 contribute to the ATP site. The Nucleophile role is filled by Cys-101. A disulfide bridge links Cys-101 with Cys-193. Gly-125 contributes to the ATP binding site. The segment at 143–145 (KDQ) is interaction with tRNA. Cys-193 (cysteine persulfide intermediate) is an active-site residue.

It belongs to the MnmA/TRMU family.

The protein resides in the cytoplasm. It carries out the reaction S-sulfanyl-L-cysteinyl-[protein] + uridine(34) in tRNA + AH2 + ATP = 2-thiouridine(34) in tRNA + L-cysteinyl-[protein] + A + AMP + diphosphate + H(+). Its function is as follows. Catalyzes the 2-thiolation of uridine at the wobble position (U34) of tRNA, leading to the formation of s(2)U34. The protein is tRNA-specific 2-thiouridylase MnmA of Mycolicibacterium paratuberculosis (strain ATCC BAA-968 / K-10) (Mycobacterium paratuberculosis).